A 154-amino-acid polypeptide reads, in one-letter code: Protein aau3 (154 aa).

Residues 2–132 (RLTKQTNYAV…QGYTIDDLVK (131 aa)) enclose the HTH rrf2-type domain. The [2Fe-2S] cluster site is built by C91, C99, and C105.

It depends on [2Fe-2S] cluster as a cofactor.

Required for growth utilizing PHB cycle intermediates. The sequence is that of Protein aau3 (aau3) from Rhizobium meliloti (strain 1021) (Ensifer meliloti).